Here is a 724-residue protein sequence, read N- to C-terminus: NAD(+) hydrolase SARM1 (724 aa).

Residues 1-27 (MVLTLLFSAYKLCRFFTMSGPRPGADR) constitute a mitochondrion transit peptide. A disordered region spans residues 24–56 (GADRLTVPGPDRSGGASPWWAAGGRGSREVSPG). Over residues 36–45 (SGGASPWWAA) the composition is skewed to low complexity. An ARM 1 repeat occupies 60-100 (EVQGALERSLPELQQALSELKQASAARAVGAGLAEVFQLVE). NAD(+) is bound by residues W103, R110, 149-157 (EQILVAENR), and 190-193 (HMFK). ARM repeat units follow at residues 114 to 153 (QGLCDAIRLDGGLDLLLRLLQAPELETRVQAARLLEQILV), 155 to 193 (ENRDRVARIGLGVILNLAKEREPVELARSVAGILEHMFK), 196 to 235 (EETCQRLVAAGGLDAVLYWCRRTDPALLRHCALALANCAL), 237 to 280 (GGQT…LATN), 281 to 314 (KEVEREVEHSGTLALVEPLVASLDPGRFARCLVD), 315 to 354 (ASDTSQGRGPDDLQSLVLLLDSSRLEAQCIGAFYLCAEAA), and 359 to 402 (QGKT…EEVP). SAM domains are found at residues 412 to 476 (WKEA…LKTF) and 486 to 548 (NLAD…MLHS). Phosphoserine is present on residues S548 and S558. In terms of domain architecture, TIR spans 560–703 (DTPDVFISYR…KIIRFLQGRP (144 aa)). NAD(+) is bound by residues 569-570 (RR) and E599. E642 is a catalytic residue. Positions 703–716 (PSQDSSAGSDTSLE) are enriched in polar residues. The segment at 703-724 (PSQDSSAGSDTSLEGATPMGLP) is disordered.

Belongs to the SARM1 family. In terms of assembly, homooctamer; forms an octameric ring via SAM domains. Interacts with TICAM1/TRIF and thereby interferes with TICAM1/TRIF function. Interacts with SDC2 (via cytoplasmic domain) and MAPK10/JNK3. Phosphorylation at Ser-548 by JNK kinases (MAPK8, MAPK9 and /or MAPK10) enhance the NAD(+) hydrolase (NADase) activity. Phosphorylation at Ser-548 and subsequent activation takes place in response to oxidative stress conditions and inhibits mitochondrial respiration. As to expression, widely expressed in the brain and neurons (at protein level). Expressed in photoreceptor cells of the neural retina.

It localises to the cytoplasm. The protein resides in the cell projection. The protein localises to the axon. Its subcellular location is the dendrite. It is found in the synapse. It localises to the mitochondrion. The catalysed reaction is NAD(+) + H2O = ADP-D-ribose + nicotinamide + H(+). The enzyme catalyses NAD(+) = cyclic ADP-beta-D-ribose + nicotinamide + H(+). It carries out the reaction NADP(+) + H2O = ADP-D-ribose 2'-phosphate + nicotinamide + H(+). Its activity is regulated as follows. Autoinhibited: in the inactive state, the enzymatic TIR domain is held apart by the autoinhibiting ARM repeats. NAD(+)-binding to ARM repeats maintains an inactive state by promoting interaction between ARM repeats and the TIR domain, thereby facilitating inhibition of the enzymatic TIR domain. Following activation, possibly by nicotinamide mononucleotide (NMN), auto-inhibitory interactions are released, allowing self-association of the TIR domains and subsequent activation of the NAD(+) hydrolase (NADase) activity. Self-association of TIR domains is facilitated by the octamer of SAM domains. Its function is as follows. NAD(+) hydrolase, which plays a key role in axonal degeneration following injury by regulating NAD(+) metabolism. Acts as a negative regulator of MYD88- and TRIF-dependent toll-like receptor signaling pathway by promoting Wallerian degeneration, an injury-induced form of programmed subcellular death which involves degeneration of an axon distal to the injury site. Wallerian degeneration is triggered by NAD(+) depletion: in response to injury, SARM1 is activated and catalyzes cleavage of NAD(+) into ADP-D-ribose (ADPR), cyclic ADPR (cADPR) and nicotinamide; NAD(+) cleavage promoting cytoskeletal degradation and axon destruction. Also able to hydrolyze NADP(+), but not other NAD(+)-related molecules. Can activate neuronal cell death in response to stress. Regulates dendritic arborization through the MAPK4-JNK pathway. Involved in innate immune response: inhibits both TICAM1/TRIF- and MYD88-dependent activation of JUN/AP-1, TRIF-dependent activation of NF-kappa-B and IRF3, and the phosphorylation of MAPK14/p38. The sequence is that of NAD(+) hydrolase SARM1 from Mus musculus (Mouse).